The following is a 266-amino-acid chain: Cyclin-C (266 aa).

The region spanning 47–151 is the Cyclin N-terminal domain; it reads IIQVLGEQLK…LLENLDCCLI (105 aa).

It belongs to the cyclin family. Cyclin C subfamily. Component of the Cdk8 module of the Mediator complex.

Its subcellular location is the nucleus. Component of the Mediator complex, a coactivator involved in regulated gene transcription of nearly all RNA polymerase II-dependent genes. Mediator functions as a bridge to convey information from gene-specific regulatory proteins to the basal RNA polymerase II transcription machinery. Mediator is recruited to promoters by direct interactions with regulatory proteins and serves as a scaffold for the assembly of a functional preinitiation complex with RNA polymerase II and the general transcription factors. Binds to and activates cyclin-dependent kinase Cdk8 that phosphorylates the CTD (C-terminal domain) of the large subunit of RNA polymerase II (RNAp II), which may inhibit the formation of a transcription initiation complex. This is Cyclin-C (CycC) from Anopheles gambiae (African malaria mosquito).